The sequence spans 508 residues: Photosystem II CP47 reaction center protein (508 aa).

6 helical membrane passes run serine 21–serine 36, isoleucine 101–tryptophan 115, glycine 140–phenylalanine 156, isoleucine 203–serine 218, valine 237–valine 252, and serine 457–arginine 472.

The protein belongs to the PsbB/PsbC family. PsbB subfamily. As to quaternary structure, PSII is composed of 1 copy each of membrane proteins PsbA, PsbB, PsbC, PsbD, PsbE, PsbF, PsbH, PsbI, PsbJ, PsbK, PsbL, PsbM, PsbT, PsbX, PsbY, PsbZ, Psb30/Ycf12, at least 3 peripheral proteins of the oxygen-evolving complex and a large number of cofactors. It forms dimeric complexes. Binds multiple chlorophylls. PSII binds additional chlorophylls, carotenoids and specific lipids. is required as a cofactor.

It is found in the plastid. It localises to the chloroplast thylakoid membrane. Functionally, one of the components of the core complex of photosystem II (PSII). It binds chlorophyll and helps catalyze the primary light-induced photochemical processes of PSII. PSII is a light-driven water:plastoquinone oxidoreductase, using light energy to abstract electrons from H(2)O, generating O(2) and a proton gradient subsequently used for ATP formation. The chain is Photosystem II CP47 reaction center protein from Helianthus annuus (Common sunflower).